A 310-amino-acid chain; its full sequence is UDP-N-acetylenolpyruvoylglucosamine reductase (310 aa).

The 166-residue stretch at 23–188 folds into the FAD-binding PCMH-type domain; the sequence is KVGGNAEIFF…LKAVFKVNKG (166 aa). The active site involves arginine 168. The active-site Proton donor is serine 217. Residue glutamate 287 is part of the active site.

It belongs to the MurB family. It depends on FAD as a cofactor.

It localises to the cytoplasm. The catalysed reaction is UDP-N-acetyl-alpha-D-muramate + NADP(+) = UDP-N-acetyl-3-O-(1-carboxyvinyl)-alpha-D-glucosamine + NADPH + H(+). It functions in the pathway cell wall biogenesis; peptidoglycan biosynthesis. Cell wall formation. In Rickettsia bellii (strain OSU 85-389), this protein is UDP-N-acetylenolpyruvoylglucosamine reductase.